Consider the following 171-residue polypeptide: Protein GrpE (171 aa).

Positions 1 to 22 (MNHEQPDIESQQSAADAAATAG) are disordered.

It belongs to the GrpE family. In terms of assembly, homodimer.

It localises to the cytoplasm. Functionally, participates actively in the response to hyperosmotic and heat shock by preventing the aggregation of stress-denatured proteins, in association with DnaK and GrpE. It is the nucleotide exchange factor for DnaK and may function as a thermosensor. Unfolded proteins bind initially to DnaJ; upon interaction with the DnaJ-bound protein, DnaK hydrolyzes its bound ATP, resulting in the formation of a stable complex. GrpE releases ADP from DnaK; ATP binding to DnaK triggers the release of the substrate protein, thus completing the reaction cycle. Several rounds of ATP-dependent interactions between DnaJ, DnaK and GrpE are required for fully efficient folding. This is Protein GrpE from Stenotrophomonas maltophilia (strain K279a).